We begin with the raw amino-acid sequence, 107 residues long: Antimicrobial peptide damicornin (107 aa).

Residues 1–22 form the signal peptide; the sequence is MKVLVILFGAMLVLMEFQKASA. Positions 23 to 67 are excised as a propeptide; the sequence is ATLLEDFDDDDDLLDDGGDFDLEANSDASSGNGNDSNDAVPEKRR. Acidic residues predominate over residues 37–46; sequence DDGGDFDLEA. Residues 37–62 are disordered; sequence DDGGDFDLEANSDASSGNGNDSNDAV. The segment covering 47–61 has biased composition (low complexity); sequence NSDASSGNGNDSNDA. 3 cysteine pairs are disulfide-bonded: cysteine 69–cysteine 105, cysteine 78–cysteine 99, and cysteine 85–cysteine 103. Residue arginine 106 is modified to Arginine amide.

This sequence belongs to the coral AMP family. Is specifically expressed in the granular cells of the ectoderm.

The protein resides in the cytoplasm. Its subcellular location is the stress granule. The protein localises to the secreted. In terms of biological role, cationic peptide with probable antimicrobial activity against coral pathogens. Shows in vitro activity against Gram-positive bacteria and the filamentous fungus F.oxysporum (MIC=1.25 uM). Gram-positive bacteria tested are B.megaterium (MIC=20 uM), S.aureus (MIC=5 uM), M. luteus (MIC=1.25 uM), B.stationis (MIC=10 uM), M.maritypicum (MIC=20 uM). Has no or little effect against Gram-negative bacteria (the coral pathogen V.coralliilyticus (MIC&gt;20 uM), V.aesturianus (MIC&gt;20 uM), V.shiloi (MIC&gt;20 uM), and E.coli (MIC=10 uM)). Has no hemolytic activity against sheep erythrocytes. The chain is Antimicrobial peptide damicornin from Pocillopora damicornis (Cauliflower coral).